The sequence spans 833 residues: Leucine--tRNA ligase (833 aa).

Positions 41–52 (PYPSGAGLHVGH) match the 'HIGH' region motif. The 'KMSKS' region signature appears at 610-614 (KMSKS). Residue K613 participates in ATP binding.

It belongs to the class-I aminoacyl-tRNA synthetase family.

It localises to the cytoplasm. The catalysed reaction is tRNA(Leu) + L-leucine + ATP = L-leucyl-tRNA(Leu) + AMP + diphosphate. This is Leucine--tRNA ligase from Streptococcus pyogenes serotype M49 (strain NZ131).